Consider the following 1355-residue polypeptide: Patatin-like phospholipase domain-containing protein 6 (1355 aa).

The Lumenal segment spans residues 1 to 43; sequence MGTPSHELNTTSSGAEVIQKTLEEGLGRRICVAQPVPFVPQVL. Asn-9 carries N-linked (GlcNAc...) asparagine glycosylation. The chain crosses the membrane as a helical span at residues 44–64; it reads GVMIGAGVAVLVTAVLILLVV. Over 65 to 1355 the chain is Cytoplasmic; that stretch reads RRLRVQKTPA…QETPSSVADA (1291 aa). A nucleoside 3',5'-cyclic phosphate is bound at residue 179–306; it reads VLGHFEKPLF…VRVVQIIMVR (128 aa). Ser-338 is modified (phosphoserine). Residues 338 to 395 form a disordered region; that stretch reads SPGLPTRTSPVRGSKRVVSTSGTEDTSKETSGRPLDSIGAPLPGPAGDPVKPTSLEAP. The span at 343 to 361 shows a compositional bias: polar residues; that stretch reads TRTSPVRGSKRVVSTSGTE. The residue at position 345 (Thr-345) is a Phosphothreonine. Residues Ser-346, Ser-356, and Ser-405 each carry the phosphoserine modification. A nucleoside 3',5'-cyclic phosphate-binding positions include 492–614 and 610–730; these read ELAK…VAAR and TVAA…LSQK. In terms of domain architecture, PNPLA spans 961-1127; it reads LVLGGGGARG…INNLPADIAR (167 aa). The short motif at 965–970 is the GXGXXG element; sequence GGGARG. Residues 992–996 carry the GXSXG motif; sequence GTSIG. The active-site Nucleophile is the Ser-994. The active-site Proton acceptor is the Asp-1114. Positions 1114-1116 match the DGA/G motif; sequence DGG. Residues 1286 to 1355 are disordered; that stretch reads SYVSDGCADG…QETPSSVADA (70 aa). Positions 1293–1309 are enriched in acidic residues; the sequence is ADGEESDCLTEYEEDAG.

This sequence belongs to the NTE family. Post-translationally, glycosylated. Expressed in brain, testes and kidney (at protein level). Expressed ubiquitously in brain of young mice. Reaching adulthood, there is a most prominent expression in Purkinje cells, granule cells and pyramidal neurons of the hippocampus and some large neurons in the medulla oblongata, nucleus dentatus and pons.

The protein resides in the endoplasmic reticulum membrane. It catalyses the reaction a 1-acyl-sn-glycero-3-phosphocholine + H2O = sn-glycerol 3-phosphocholine + a fatty acid + H(+). It carries out the reaction 1-hexadecanoyl-sn-glycero-3-phosphocholine + H2O = sn-glycerol 3-phosphocholine + hexadecanoate + H(+). The catalysed reaction is 1-hexadecanoyl-sn-glycero-3-phosphate + H2O = sn-glycerol 3-phosphate + hexadecanoate + H(+). The enzyme catalyses 1-(9Z-octadecenoyl)-sn-glycero-3-phosphocholine + H2O = sn-glycerol 3-phosphocholine + (9Z)-octadecenoate + H(+). It catalyses the reaction 1-hexadecanoylglycerol + H2O = glycerol + hexadecanoate + H(+). It carries out the reaction 2-hexadecanoylglycerol + H2O = glycerol + hexadecanoate + H(+). The catalysed reaction is 1-(9Z-octadecenoyl)-glycerol + H2O = glycerol + (9Z)-octadecenoate + H(+). The enzyme catalyses 2-(9Z-octadecenoyl)-glycerol + H2O = glycerol + (9Z)-octadecenoate + H(+). It catalyses the reaction 2-(5Z,8Z,11Z,14Z-eicosatetraenoyl)-glycerol + H2O = glycerol + (5Z,8Z,11Z,14Z)-eicosatetraenoate + H(+). Its activity is regulated as follows. Inhibited by a series a OPs such as mipafox (MPX), phenyl saligenin phosphate (PSP), phenyl dipentyl phosphinate (PDPP), diisopropyl fluorophosphate and paraoxon. Phospholipase B that deacylates intracellular phosphatidylcholine (PtdCho), generating glycerophosphocholine (GroPtdCho). This deacylation occurs at both sn-2 and sn-1 positions of PtdCho. Catalyzes the hydrolysis of several naturally occurring membrane-associated lipids. Hydrolyzes lysophospholipids and monoacylglycerols, preferring the 1-acyl to the 2-acyl isomer. Does not catalyze hydrolysis of di- or triacylglycerols or fatty acid amides. The sequence is that of Patatin-like phospholipase domain-containing protein 6 (Pnpla6) from Mus musculus (Mouse).